The sequence spans 712 residues: Translation initiation factor eIF2B subunit epsilon (712 aa).

A disordered region spans residues 1–20 (MAGKKGQKKSGLGNHGKNSD). Residues serine 478, serine 481, serine 507, serine 525, serine 538, and serine 707 each carry the phosphoserine modification. The W2 domain maps to 539 to 710 (EFEDEDFEKE…QNADEESSSE (172 aa)).

This sequence belongs to the eIF-2B gamma/epsilon subunits family. As to quaternary structure, component of the translation initiation factor 2B (eIF2B) complex which is a heterodecamer of two sets of five different subunits: alpha, beta, gamma, delta and epsilon. Subunits alpha, beta and delta comprise a regulatory subcomplex and subunits epsilon and gamma comprise a catalytic subcomplex. Within the complex, the hexameric regulatory complex resides at the center, with the two heterodimeric catalytic subcomplexes bound on opposite sides.

The protein resides in the cytoplasm. The protein localises to the cytosol. Acts as a catalytic component of the translation initiation factor 2B (eIF2B) complex, which catalyzes the exchange of GDP for GTP on eukaryotic initiation factor 2 (eIF2) and is regulated by phosphorylated eIF2. Its guanine nucleotide exchange factor activity is repressed when bound to eIF2 complex phosphorylated on the alpha subunit, thereby limiting the amount of methionyl-initiator methionine tRNA available to the ribosome and consequently global translation is repressed. It activates the synthesis of GCN4 in yeast under amino acid starvation conditions by suppressing the inhibitory effects of multiple AUG codons present in the leader of GCN4 mRNA. It may promote either repression or activation of GCN4 expression depending on amino acid availability. GCD6 and GCD7 repress GCN4 expression at the translational level by ensuring that ribosomes which have translated UORF1 will reinitiate at UORF2, -3, or -4 and thus fail to reach the GCN4 start site. This Saccharomyces cerevisiae (strain ATCC 204508 / S288c) (Baker's yeast) protein is Translation initiation factor eIF2B subunit epsilon (GCD6).